A 218-amino-acid chain; its full sequence is MSGGLAPSKSTVYVSNLPFSLTNNDLHRIFSKYGKVVKVTILKDKDSRKSKGVSFVLFLDKESAQNCVRGLNNKQLFGRAIKASIAKDNGRATEFIRRRNYTDKSRCYECGDTGHLSYACPKNMLGEREPPQKKEKKKRKRLVEEEEEEVVEEEESEDEGEDPALDSLSQAIAFQQARIDEEKNKYRHDPAEASTSEDSRRPRIKKSTYFSDEDELSD.

The region spanning Ser10–Asp88 is the RRM domain. The segment at Ser105–Lys122 adopts a CCHC-type zinc-finger fold. The interval Ala119–Asp218 is disordered. The stretch at Gln132–His188 forms a coiled coil. The span at Glu144–Ala164 shows a compositional bias: acidic residues. The segment covering Arg178–Arg201 has biased composition (basic and acidic residues).

In terms of assembly, component of the U11/U12 snRNPs that are part of the U12-type spliceosome.

It localises to the nucleus. The sequence is that of Zinc finger CCHC-type and RNA-binding motif-containing protein 1 (zcrb1) from Xenopus laevis (African clawed frog).